The chain runs to 404 residues: Cysteine desulfurase IscS (404 aa).

Pyridoxal 5'-phosphate contacts are provided by residues 75–76 (AT), N155, Q183, and 203–205 (SGH). K206 is subject to N6-(pyridoxal phosphate)lysine. T243 contributes to the pyridoxal 5'-phosphate binding site. Residue C328 is the Cysteine persulfide intermediate of the active site. Residue C328 participates in [2Fe-2S] cluster binding.

This sequence belongs to the class-V pyridoxal-phosphate-dependent aminotransferase family. NifS/IscS subfamily. Homodimer. Forms a heterotetramer with IscU, interacts with other sulfur acceptors. Requires pyridoxal 5'-phosphate as cofactor.

The protein resides in the cytoplasm. It carries out the reaction (sulfur carrier)-H + L-cysteine = (sulfur carrier)-SH + L-alanine. Its pathway is cofactor biosynthesis; iron-sulfur cluster biosynthesis. Its function is as follows. Master enzyme that delivers sulfur to a number of partners involved in Fe-S cluster assembly, tRNA modification or cofactor biosynthesis. Catalyzes the removal of elemental sulfur atoms from cysteine to produce alanine. Functions as a sulfur delivery protein for Fe-S cluster synthesis onto IscU, an Fe-S scaffold assembly protein, as well as other S acceptor proteins. The polypeptide is Cysteine desulfurase IscS (Shewanella halifaxensis (strain HAW-EB4)).